The following is a 658-amino-acid chain: Translation factor GUF1, mitochondrial (658 aa).

The N-terminal 40 residues, M1 to N40, are a transit peptide targeting the mitochondrion. One can recognise a tr-type G domain in the interval D60–V240. GTP contacts are provided by residues A69–S76, D133–H137, and N187–D190.

The protein belongs to the TRAFAC class translation factor GTPase superfamily. Classic translation factor GTPase family. LepA subfamily.

The protein resides in the mitochondrion inner membrane. It catalyses the reaction GTP + H2O = GDP + phosphate + H(+). Functionally, promotes mitochondrial protein synthesis. May act as a fidelity factor of the translation reaction, by catalyzing a one-codon backward translocation of tRNAs on improperly translocated ribosomes. Binds to mitochondrial ribosomes in a GTP-dependent manner. In Paracoccidioides lutzii (strain ATCC MYA-826 / Pb01) (Paracoccidioides brasiliensis), this protein is Translation factor GUF1, mitochondrial.